We begin with the raw amino-acid sequence, 355 residues long: Guanine nucleotide-binding protein G(z) subunit alpha (355 aa).

A compositionally biased stretch (basic and acidic residues) spans 1-14; that stretch reads MGCRQSSEEKEAAR. Positions 1–26 are disordered; it reads MGCRQSSEEKEAARRSRRIDRHLRSE. Gly2 carries the N-myristoyl glycine lipid modification. Cys3 is lipidated: S-palmitoyl cysteine. The 324-residue stretch at 32–355 folds into the G-alpha domain; that stretch reads REIKLLLLGT…QNNLKYIGLC (324 aa). Positions 35–48 are G1 motif; sequence KLLLLGTSNSGKST. Residues 40-47, 176-182, 201-205, 270-273, and Ala327 each bind GTP; these read GTSNSGKS, LRSRDMT, DVGGQ, and NKKD. Mg(2+) contacts are provided by Ser47 and Thr182. The tract at residues 174-182 is G2 motif; the sequence is DILRSRDMT. A G3 motif region spans residues 197–206; that stretch reads FKMVDVGGQR. The interval 266–273 is G4 motif; the sequence is ILFLNKKD. The tract at residues 325 to 330 is G5 motif; sequence TCATDT.

The protein belongs to the G-alpha family. G(i/o/t/z) subfamily. G-proteins are composed of 3 units; alpha, beta and gamma. The alpha chain contains the guanine nucleotide binding site. Interacts with ADGRB2.

The protein localises to the membrane. Its function is as follows. Guanine nucleotide-binding proteins (G proteins) are involved as modulators or transducers in various transmembrane signaling systems. This Mus musculus (Mouse) protein is Guanine nucleotide-binding protein G(z) subunit alpha (Gnaz).